The sequence spans 844 residues: Penicillin-binding protein 1B (844 aa).

Basic and acidic residues predominate over residues Met1–Gly10. The segment at Met1–Arg60 is disordered. The Cytoplasmic portion of the chain corresponds to Met1–Arg63. Positions Arg11–Arg25 are enriched in basic residues. Residues Asp30–Glu44 show a composition bias toward acidic residues. Basic residues predominate over residues Arg48–Arg60. A helical; Signal-anchor for type II membrane protein membrane pass occupies residues Gly64–Leu87. The tract at residues Asp88–Arg250 is membrane association. The Periplasmic portion of the chain corresponds to Asp88–Asn844. The interval Arg109 to Arg200 is uvrB domain 2 homolog. Residues Phe195–Lys367 form a transglycosylase region. The Proton donor; for transglycosylase activity role is filled by Glu233. The segment at Ser444–Ala736 is transpeptidase. The active-site Acyl-ester intermediate; for transpeptidase activity is Ser510. A compositionally biased stretch (low complexity) spans Leu793 to Gln825. The segment at Leu793–Gly835 is disordered.

It in the N-terminal section; belongs to the glycosyltransferase 51 family. In the C-terminal section; belongs to the transpeptidase family. As to quaternary structure, forms a trimeric complex with MipA and MltA. Has also been shown to exist as monomer or homodimer; homodimer of Alpha and Gamma isozymes can be found. Interacts with UvrA, FtsL and FtsN.

Its subcellular location is the cell inner membrane. The enzyme catalyses [GlcNAc-(1-&gt;4)-Mur2Ac(oyl-L-Ala-gamma-D-Glu-L-Lys-D-Ala-D-Ala)](n)-di-trans,octa-cis-undecaprenyl diphosphate + beta-D-GlcNAc-(1-&gt;4)-Mur2Ac(oyl-L-Ala-gamma-D-Glu-L-Lys-D-Ala-D-Ala)-di-trans,octa-cis-undecaprenyl diphosphate = [GlcNAc-(1-&gt;4)-Mur2Ac(oyl-L-Ala-gamma-D-Glu-L-Lys-D-Ala-D-Ala)](n+1)-di-trans,octa-cis-undecaprenyl diphosphate + di-trans,octa-cis-undecaprenyl diphosphate + H(+). It carries out the reaction Preferential cleavage: (Ac)2-L-Lys-D-Ala-|-D-Ala. Also transpeptidation of peptidyl-alanyl moieties that are N-acyl substituents of D-alanine.. Its pathway is cell wall biogenesis; peptidoglycan biosynthesis. In terms of biological role, cell wall formation. Synthesis of cross-linked peptidoglycan from the lipid intermediates. The enzyme has a penicillin-insensitive transglycosylase N-terminal domain (formation of linear glycan strands) and a penicillin-sensitive transpeptidase C-terminal domain (cross-linking of the peptide subunits). In Escherichia coli (strain K12), this protein is Penicillin-binding protein 1B (mrcB).